A 314-amino-acid chain; its full sequence is Carbamate kinase (314 aa).

It belongs to the carbamate kinase family. In terms of assembly, homodimer.

The protein resides in the cytoplasm. It catalyses the reaction hydrogencarbonate + NH4(+) + ATP = carbamoyl phosphate + ADP + H2O + H(+). It participates in metabolic intermediate metabolism; carbamoyl phosphate degradation; CO(2) and NH(3) from carbamoyl phosphate: step 1/1. This Clostridium perfringens (strain 13 / Type A) protein is Carbamate kinase (arcC).